The chain runs to 205 residues: Small ribosomal subunit protein uS4 (205 aa).

An S4 RNA-binding domain is found at 94-157 (SRLDTVVYRM…KQIALIQESI (64 aa)).

The protein belongs to the universal ribosomal protein uS4 family. In terms of assembly, part of the 30S ribosomal subunit. Contacts protein S5. The interaction surface between S4 and S5 is involved in control of translational fidelity.

One of the primary rRNA binding proteins, it binds directly to 16S rRNA where it nucleates assembly of the body of the 30S subunit. Its function is as follows. With S5 and S12 plays an important role in translational accuracy. The polypeptide is Small ribosomal subunit protein uS4 (Rickettsia canadensis (strain McKiel)).